The following is a 158-amino-acid chain: MIDDNGYRLNVGIVLCNTHQQVLWARKYKQHYCWQFPQGGINIGETPEQAMYRELFEEIGLNYQDVRILSSTQYWMHYKLPKKLIRWKIRPICFGQKQKWFLLKLLSKDTRINIKSNKDYTFDRWKWVSLWYPIRRVVFFKRDVYRKVMQEFVDVIIS.

The 145-residue stretch at Gly-6–Gln-150 folds into the Nudix hydrolase domain. Positions Gly-39–Gly-60 match the Nudix box motif.

The protein belongs to the Nudix hydrolase family. RppH subfamily. A divalent metal cation is required as a cofactor.

Functionally, accelerates the degradation of transcripts by removing pyrophosphate from the 5'-end of triphosphorylated RNA, leading to a more labile monophosphorylated state that can stimulate subsequent ribonuclease cleavage. This chain is RNA pyrophosphohydrolase, found in Blochmanniella pennsylvanica (strain BPEN).